A 385-amino-acid polypeptide reads, in one-letter code: dTDP-4-dehydro-2,3,6-trideoxy-D-glucose 4-aminotransferase (385 aa).

Lysine 182 bears the N6-(pyridoxal phosphate)lysine mark.

This sequence belongs to the DegT/DnrJ/EryC1 family. Homodimer. It depends on pyridoxal 5'-phosphate as a cofactor.

The catalysed reaction is dTDP-4-amino-2,3,4,6-tetradeoxy-alpha-D-erythro-hexopyranose + 2-oxoglutarate = dTDP-4-dehydro-2,3,6-trideoxy-alpha-D-hexopyranose + L-glutamate. In terms of biological role, involved in the biosynthesis of forosamine ((4-dimethylamino)-2,3,4,6-tetradeoxy-alpha-D-threo-hexopyranose), a highly deoxygenated sugar component of several bioactive natural products such as the insecticidal spinosyns A and D. In the presence of pyridoxal 5'-phosphate (PLP) and alpha-ketoglutarate, catalyzes the C-4 transamination of dTDP-4-keto-2,3,6-trideoxy-alpha-D-glucose to yield dTDP-4-amino-2,3,4,6-tetradeoxy-alpha-D-glucose. It can also use pyruvate, but less efficiently than alpha-ketoglutarate. Also able to catalyze the C-4 transamination of dTDP-4-keto-2,6-dideoxy-alpha-D-glucose to yield dTDP-4-amino-2,4,6-trideoxy-D-glucose. This Saccharopolyspora spinosa protein is dTDP-4-dehydro-2,3,6-trideoxy-D-glucose 4-aminotransferase.